Here is a 363-residue protein sequence, read N- to C-terminus: FMNH(2)-dependent dimethylsulfone monooxygenase (363 aa).

This sequence belongs to the SsuD family.

The catalysed reaction is dimethyl sulfone + FMNH2 + O2 = methanesulfinate + FMN + formaldehyde + H2O + 2 H(+). In terms of biological role, involved in the dimethyl sulfide degradation pathway. Catalyzes the oxidation of dimethylsulfone (DMSO2) to yield methanesulfinate, which is oxidized spontaneously to methanesulfonate in the presence of dioxygen and FMNH(2). The protein is FMNH(2)-dependent dimethylsulfone monooxygenase of Pseudomonas putida (Arthrobacter siderocapsulatus).